Here is a 308-residue protein sequence, read N- to C-terminus: UDP-N-acetylenolpyruvoylglucosamine reductase (308 aa).

The region spanning 22–185 is the FAD-binding PCMH-type domain; the sequence is RVGGPADWLF…TEATFRAEAG (164 aa). Arg165 is an active-site residue. Basic and acidic residues predominate over residues 197-211; that stretch reads QIARRDSSQPTKERS. The interval 197–228 is disordered; it reads QIARRDSSQPTKERSAGSTFRNPAGFSSTGRA. A compositionally biased stretch (polar residues) spans 212–226; the sequence is AGSTFRNPAGFSSTG. The active-site Proton donor is the Ser214. Residue Glu296 is part of the active site.

It belongs to the MurB family. Requires FAD as cofactor.

Its subcellular location is the cytoplasm. The enzyme catalyses UDP-N-acetyl-alpha-D-muramate + NADP(+) = UDP-N-acetyl-3-O-(1-carboxyvinyl)-alpha-D-glucosamine + NADPH + H(+). Its pathway is cell wall biogenesis; peptidoglycan biosynthesis. In terms of biological role, cell wall formation. The protein is UDP-N-acetylenolpyruvoylglucosamine reductase of Cereibacter sphaeroides (strain ATCC 17029 / ATH 2.4.9) (Rhodobacter sphaeroides).